Here is a 353-residue protein sequence, read N- to C-terminus: tRNA N6-adenosine threonylcarbamoyltransferase (353 aa).

H111 and H115 together coordinate Fe cation. Residues 134–138 (LVSGG), D167, G180, D184, and N279 each bind substrate. D307 is a Fe cation binding site.

It belongs to the KAE1 / TsaD family. Requires Fe(2+) as cofactor.

It is found in the cytoplasm. It carries out the reaction L-threonylcarbamoyladenylate + adenosine(37) in tRNA = N(6)-L-threonylcarbamoyladenosine(37) in tRNA + AMP + H(+). Functionally, required for the formation of a threonylcarbamoyl group on adenosine at position 37 (t(6)A37) in tRNAs that read codons beginning with adenine. Is involved in the transfer of the threonylcarbamoyl moiety of threonylcarbamoyl-AMP (TC-AMP) to the N6 group of A37, together with TsaE and TsaB. TsaD likely plays a direct catalytic role in this reaction. In Thermosynechococcus vestitus (strain NIES-2133 / IAM M-273 / BP-1), this protein is tRNA N6-adenosine threonylcarbamoyltransferase.